The sequence spans 432 residues: Glutamate-1-semialdehyde 2,1-aminomutase 1 (432 aa).

An N6-(pyridoxal phosphate)lysine modification is found at lysine 268.

The protein belongs to the class-III pyridoxal-phosphate-dependent aminotransferase family. HemL subfamily. In terms of assembly, homodimer. It depends on pyridoxal 5'-phosphate as a cofactor.

The protein localises to the cytoplasm. It carries out the reaction (S)-4-amino-5-oxopentanoate = 5-aminolevulinate. It participates in porphyrin-containing compound metabolism; protoporphyrin-IX biosynthesis; 5-aminolevulinate from L-glutamyl-tRNA(Glu): step 2/2. The chain is Glutamate-1-semialdehyde 2,1-aminomutase 1 from Bacillus cereus (strain B4264).